The chain runs to 241 residues: tRNA (guanine-N(7)-)-methyltransferase (241 aa).

S-adenosyl-L-methionine is bound by residues Glu-76, Glu-101, Asp-128, and Asp-150. Asp-150 is a catalytic residue. Substrate-binding positions include Lys-154, Asp-186, and 219–222 (TRYE).

This sequence belongs to the class I-like SAM-binding methyltransferase superfamily. TrmB family.

The catalysed reaction is guanosine(46) in tRNA + S-adenosyl-L-methionine = N(7)-methylguanosine(46) in tRNA + S-adenosyl-L-homocysteine. The protein operates within tRNA modification; N(7)-methylguanine-tRNA biosynthesis. Its function is as follows. Catalyzes the formation of N(7)-methylguanine at position 46 (m7G46) in tRNA. This is tRNA (guanine-N(7)-)-methyltransferase from Cereibacter sphaeroides (strain ATCC 17023 / DSM 158 / JCM 6121 / CCUG 31486 / LMG 2827 / NBRC 12203 / NCIMB 8253 / ATH 2.4.1.) (Rhodobacter sphaeroides).